The following is a 129-amino-acid chain: uncharacterized protein (129 aa).

Over residues 86-96 (NDGFSSDDEPE) the composition is skewed to acidic residues. The interval 86–129 (NDGFSSDDEPEEHVILTEDNQGEPSETPQATFDITEFIKTEDED) is disordered. The span at 103–117 (EDNQGEPSETPQATF) shows a compositional bias: polar residues.

The protein belongs to the asfivirus D129L family.

This is an uncharacterized protein from African swine fever virus (isolate Tick/South Africa/Pretoriuskop Pr4/1996) (ASFV).